An 80-amino-acid chain; its full sequence is Peptide LaIT2 (80 aa).

The signal sequence occupies residues 1–21; it reads MAKHLIVMFLVIMVISSLVDC. The BetaSPN-type CS-alpha/beta domain occupies 49–80; that stretch reads QYGCPIISNMCEDHCRRKKMEGQCDLLDCVCS. Intrachain disulfides connect Cys52-Cys72, Cys59-Cys77, and Cys63-Cys79.

Belongs to the long chain scorpion toxin family. Class 2 subfamily. In terms of tissue distribution, expressed by the venom gland.

It is found in the secreted. Its function is as follows. Dual-function toxin that acts both as an insecticidal and an antimicrobial peptide. May inhibit voltage-gated potassium channels (Kv). This amphipathic peptide causes significant antimicrobial activity against E.coli (MIC=7 uM) but does not show any activity against S.aureus even at high concentration. In vivo, causes paralysis or death to crickets. This is Peptide LaIT2 from Liocheles australasiae (Dwarf wood scorpion).